A 147-amino-acid chain; its full sequence is Phospholipase A2 SSD1043 (147 aa).

The N-terminal stretch at 1-22 is a signal peptide; that stretch reads MSPKFMFFSIIAVWSCAAVTEA. A propeptide spanning residues 23–28 is cleaved from the precursor; sequence LFIQHR. 5 disulfides stabilise this stretch: Cys55–Cys71, Cys70–Cys130, Cys77–Cys123, Cys86–Cys116, and Cys109–Cys121. 2 residues coordinate Ca(2+): Gly56 and Gly58. His74 is a catalytic residue. A Ca(2+)-binding site is contributed by Asp75. Asp124 is an active-site residue.

Requires Ca(2+) as cofactor. In terms of tissue distribution, expressed by the venom gland.

The protein localises to the secreted. It catalyses the reaction a 1,2-diacyl-sn-glycero-3-phosphocholine + H2O = a 1-acyl-sn-glycero-3-phosphocholine + a fatty acid + H(+). PLA2 catalyzes the calcium-dependent hydrolysis of the 2-acyl groups in 3-sn-phosphoglycerides. This Scolopendra dehaani (Thai centipede) protein is Phospholipase A2 SSD1043.